The following is a 172-amino-acid chain: C-phycocyanin beta chain (172 aa).

Residue asparagine 72 is modified to N4-methylasparagine. (2R,3E)-phycocyanobilin-binding residues include cysteine 82 and cysteine 153.

The protein belongs to the phycobiliprotein family. Heterodimer of an alpha and a beta subunit, which further assembles into trimers and the trimers into hexamers. The basic functional unit of phycobiliproteins is a ring-shaped hexamer formed from two back-to-back trimers contacting via the alpha chain subunits. The trimers are composed of alpha/beta subunit heterodimers arranged around a three-fold axis of symmetry. The phycoerythrins also contain a gamma subunit which is located in the center of the hexamer. Post-translationally, contains two covalently linked phycocyanobilin chromophores.

It is found in the plastid. It localises to the cyanelle thylakoid membrane. Its function is as follows. Light-harvesting photosynthetic bile pigment-protein from the phycobiliprotein complex (phycobilisome, PBS). Phycocyanin is the major phycobiliprotein in the PBS rod. This chain is C-phycocyanin beta chain (cpcB), found in Cyanophora paradoxa.